Here is a 224-residue protein sequence, read N- to C-terminus: Cytidylate kinase (224 aa).

11–19 (GPAAAGKST) is an ATP binding site.

This sequence belongs to the cytidylate kinase family. Type 1 subfamily.

The protein localises to the cytoplasm. The catalysed reaction is CMP + ATP = CDP + ADP. The enzyme catalyses dCMP + ATP = dCDP + ADP. This is Cytidylate kinase from Listeria monocytogenes serotype 4a (strain HCC23).